An 822-amino-acid polypeptide reads, in one-letter code: AP-1 complex subunit gamma-1 (822 aa).

The segment at 597–628 (EIVQTNGETEPAPLETKPPPSGPQPTSQANDL) is disordered. In terms of domain architecture, GAE spans 702 to 817 (AGIPSITAYS…QDLAEVNNFP (116 aa)).

Belongs to the adaptor complexes large subunit family. Adaptor protein complex 1 (AP-1) is a heterotetramer composed of two large adaptins (gamma-type subunit AP1G1 and beta-type subunit AP1B1), a medium adaptin (mu-type subunit AP1M1 or AP1M2) and a small adaptin (sigma-type subunit AP1S1 or AP1S2 or AP1S3). Interacts (via GAE domain) with RABEP1. Interacts with SYNRG/gamma-synergin. Interacts with EPS15. Interacts (via GAE domain) with AP1AR (via coiled-coil domain). Interacts with CLN3 (via dileucine motif); this interaction facilitates lysosomal targeting. Interacts (via GAE domain) with AFTPH/aftiphilin; the interaction is required to recruit AFTPH/aftiphilin to the perinuclear region of the cell. As to expression, widely expressed.

The protein resides in the golgi apparatus. It localises to the cytoplasmic vesicle. The protein localises to the clathrin-coated vesicle membrane. Its subcellular location is the cytoplasm. It is found in the perinuclear region. The protein resides in the clathrin-coated vesicle. It localises to the membrane. The protein localises to the clathrin-coated pit. Functionally, subunit of clathrin-associated adaptor protein complex 1 that plays a role in protein sorting in the late-Golgi/trans-Golgi network (TGN) and/or endosomes. The AP complexes mediate both the recruitment of clathrin to membranes and the recognition of sorting signals within the cytosolic tails of transmembrane cargo molecules. In association with AFTPH/aftiphilin in the aftiphilin/p200/gamma-synergin complex, involved in the trafficking of transferrin from early to recycling endosomes, and the membrane trafficking of furin and the lysosomal enzyme cathepsin D between the trans-Golgi network (TGN) and endosomes. The polypeptide is AP-1 complex subunit gamma-1 (AP1G1) (Homo sapiens (Human)).